The following is a 434-amino-acid chain: UDP-N-acetylglucosamine 1-carboxyvinyltransferase 1 (434 aa).

22–23 contributes to the phosphoenolpyruvate binding site; it reads KN. Arg-93 provides a ligand contact to UDP-N-acetyl-alpha-D-glucosamine. The Proton donor role is filled by Cys-117. A 2-(S-cysteinyl)pyruvic acid O-phosphothioketal modification is found at Cys-117. Residues 122 to 126, Asp-306, and Val-328 each bind UDP-N-acetyl-alpha-D-glucosamine; that span reads RPIDQ.

The protein belongs to the EPSP synthase family. MurA subfamily.

It is found in the cytoplasm. The enzyme catalyses phosphoenolpyruvate + UDP-N-acetyl-alpha-D-glucosamine = UDP-N-acetyl-3-O-(1-carboxyvinyl)-alpha-D-glucosamine + phosphate. The protein operates within cell wall biogenesis; peptidoglycan biosynthesis. In terms of biological role, cell wall formation. Adds enolpyruvyl to UDP-N-acetylglucosamine. The sequence is that of UDP-N-acetylglucosamine 1-carboxyvinyltransferase 1 from Bacillus cereus (strain ATCC 10987 / NRS 248).